The sequence spans 270 residues: Putative pyruvate, phosphate dikinase regulatory protein (270 aa).

150–157 (GPSRTSKS) contributes to the ADP binding site.

The protein belongs to the pyruvate, phosphate/water dikinase regulatory protein family. PDRP subfamily.

The enzyme catalyses N(tele)-phospho-L-histidyl/L-threonyl-[pyruvate, phosphate dikinase] + ADP = N(tele)-phospho-L-histidyl/O-phospho-L-threonyl-[pyruvate, phosphate dikinase] + AMP + H(+). It carries out the reaction N(tele)-phospho-L-histidyl/O-phospho-L-threonyl-[pyruvate, phosphate dikinase] + phosphate + H(+) = N(tele)-phospho-L-histidyl/L-threonyl-[pyruvate, phosphate dikinase] + diphosphate. Functionally, bifunctional serine/threonine kinase and phosphorylase involved in the regulation of the pyruvate, phosphate dikinase (PPDK) by catalyzing its phosphorylation/dephosphorylation. This chain is Putative pyruvate, phosphate dikinase regulatory protein, found in Neorickettsia sennetsu (strain ATCC VR-367 / Miyayama) (Ehrlichia sennetsu).